We begin with the raw amino-acid sequence, 361 residues long: S-adenosylmethionine decarboxylase proenzyme (361 aa).

Residues Glu-13 and Glu-16 contribute to the active site. The active-site Schiff-base intermediate with substrate; via pyruvic acid is the Ser-73. Pyruvic acid (Ser); by autocatalysis is present on Ser-73. Catalysis depends on Cys-87, which acts as the Proton donor; for catalytic activity. Active-site proton acceptor; for processing activity residues include Ser-236 and His-249.

This sequence belongs to the eukaryotic AdoMetDC family. Pyruvate is required as a cofactor. Post-translationally, is synthesized initially as an inactive proenzyme. Formation of the active enzyme involves a self-maturation process in which the active site pyruvoyl group is generated from an internal serine residue via an autocatalytic post-translational modification. Two non-identical subunits are generated from the proenzyme in this reaction, and the pyruvate is formed at the N-terminus of the alpha chain, which is derived from the carboxyl end of the proenzyme. The post-translation cleavage follows an unusual pathway, termed non-hydrolytic serinolysis, in which the side chain hydroxyl group of the serine supplies its oxygen atom to form the C-terminus of the beta chain, while the remainder of the serine residue undergoes an oxidative deamination to produce ammonia and the pyruvoyl group blocking the N-terminus of the alpha chain.

It carries out the reaction S-adenosyl-L-methionine + H(+) = S-adenosyl 3-(methylsulfanyl)propylamine + CO2. Its pathway is amine and polyamine biosynthesis; S-adenosylmethioninamine biosynthesis; S-adenosylmethioninamine from S-adenosyl-L-methionine: step 1/1. The sequence is that of S-adenosylmethionine decarboxylase proenzyme (SAMDC1) from Nicotiana sylvestris (Wood tobacco).